The sequence spans 348 residues: MGLREKLAELREEGLQDIKQSEDLKRINEIRVKMLGKKGPITSVLRGMRDLSAEERPKVGQFANKVRDELSAAIEEKRAELEQAAMNAKLAAQTIDVTLPGTPVAQGQPHVIQQIIDQVVDLFVSMGYEVAVGDEVEQEVYNFEKLNLPKDHPARDMQDTFYVTPSVLMRTQTSPMQARMLEKHDFSQGPLKMISPGKVYRRDTDDATHSHQFHQIEGMVVGKNITMADLKGTLEAVAQNLFGDKLKVRLRPSYFPFTEPSVEADITCFNCLGKGCAICKQTGWIEVLGAGMVHPNVLKMSGVDPEEYGGFAFGLGPDRFAMLKYGVDDIRNFYQNDVRFLNQFDQKG.

Residue glutamate 259 coordinates Mg(2+).

This sequence belongs to the class-II aminoacyl-tRNA synthetase family. Phe-tRNA synthetase alpha subunit type 1 subfamily. In terms of assembly, tetramer of two alpha and two beta subunits. The cofactor is Mg(2+).

Its subcellular location is the cytoplasm. It carries out the reaction tRNA(Phe) + L-phenylalanine + ATP = L-phenylalanyl-tRNA(Phe) + AMP + diphosphate + H(+). The chain is Phenylalanine--tRNA ligase alpha subunit from Limosilactobacillus reuteri (strain DSM 20016) (Lactobacillus reuteri).